Reading from the N-terminus, the 149-residue chain is Transcriptional repressor NrdR (149 aa).

The segment at 3-34 (CPYCSYEESKVVDSRSAEDYNAIRRRRECLRC) is a zinc-finger region. Residues 49 to 139 (ILVIKKDLSR…VYRQFKDINT (91 aa)) enclose the ATP-cone domain.

Belongs to the NrdR family. Zn(2+) serves as cofactor.

Functionally, negatively regulates transcription of bacterial ribonucleotide reductase nrd genes and operons by binding to NrdR-boxes. This is Transcriptional repressor NrdR from Clostridium perfringens (strain SM101 / Type A).